Reading from the N-terminus, the 65-residue chain is MKAKDIRALTTDQMLEKEKQYKEELFNLRFQQATGQLENTARLRQVRKNIARIKTILSEKELSKN.

The protein belongs to the universal ribosomal protein uL29 family.

The chain is Large ribosomal subunit protein uL29 from Lactobacillus johnsonii (strain CNCM I-12250 / La1 / NCC 533).